A 359-amino-acid polypeptide reads, in one-letter code: UPF0283 membrane protein R01807 (359 aa).

Transmembrane regions (helical) follow at residues 76-96 (FGKIAAGAFGILISLAVGLWI) and 109-129 (WLGYGAVAVVAIGVIAFLIVV).

Belongs to the UPF0283 family.

It localises to the cell inner membrane. This chain is UPF0283 membrane protein R01807, found in Rhizobium meliloti (strain 1021) (Ensifer meliloti).